The chain runs to 377 residues: Methionine import ATP-binding protein MetN 2 (377 aa).

Residues I25 to L262 enclose the ABC transporter domain. G59–S66 is a binding site for ATP.

Belongs to the ABC transporter superfamily. Methionine importer (TC 3.A.1.24) family. In terms of assembly, the complex is composed of two ATP-binding proteins (MetN), two transmembrane proteins (MetI) and a solute-binding protein (MetQ).

Its subcellular location is the cell inner membrane. It carries out the reaction L-methionine(out) + ATP + H2O = L-methionine(in) + ADP + phosphate + H(+). The catalysed reaction is D-methionine(out) + ATP + H2O = D-methionine(in) + ADP + phosphate + H(+). In terms of biological role, part of the ABC transporter complex MetNIQ involved in methionine import. Responsible for energy coupling to the transport system. This Rhodopseudomonas palustris (strain ATCC BAA-98 / CGA009) protein is Methionine import ATP-binding protein MetN 2.